A 522-amino-acid polypeptide reads, in one-letter code: Cytochrome P450 monooxygenase FGSG_08207 (522 aa).

The helical transmembrane segment at 10 to 30 (LLLSKPVVLGLAACALLFLIG) threads the bilayer. 2 N-linked (GlcNAc...) asparagine glycosylation sites follow: Asn-104 and Asn-155. Residue Cys-441 coordinates heme.

The protein belongs to the cytochrome P450 family. Heme serves as cofactor.

The protein resides in the membrane. The protein operates within secondary metabolite biosynthesis. In terms of biological role, cytochrome P450 monooxygenase; part of the gene cluster that mediates the biosynthesis of the lipopeptide fusaristatin A. Fusaristatin A consists of a polyketide chain linked to three amino acid residues glutamine (Gln), dehydroalanine (dehydro-Ala), and beta-aminoisobutyric acid. The biosynthesis starts with formation of a linear polyketide chain by the highly reducing polyketide synthase PKS6. The gene cluster does not contain an acyl-CoA ligase or an acyl-transferase, and it is therefore predicted that the polyketide is transferred directly to the nonribosomal peptide synthetase NRPS7. Modules 1-3 from NRPS7 incorporate dehydro-Ala, Gln, and beta-aminoisobutyric acid in the compound, which is released by cyclization. The beta-aminoisobutyric acid units are most likely not freely available to the NRPS, but can be synthesized from thymine, which requires a dehydrogenase, a monooxygenase, and an aminotransferase. The fusaristatin A cluster contains a cytochrome P450 monooxygenase (FGSG_08207) and an aminotransferase (FGSG_17085), which theoretically can perform two of the enzymatic steps. The enzymes may however also be involved in biosynthesis of dehydroalanine or modification of the polyketide. The dehydro-Ala residue can be a result of cyclization, where serine is dehydrated. The last gene of the cluster encodes a protein with an A/B barrel domain found in variable enzymes, which hampers functional prediction. The sequence is that of Cytochrome P450 monooxygenase FGSG_08207 from Gibberella zeae (strain ATCC MYA-4620 / CBS 123657 / FGSC 9075 / NRRL 31084 / PH-1) (Wheat head blight fungus).